The sequence spans 73 residues: UPF0352 protein HSM_0097 (73 aa).

Belongs to the UPF0352 family.

This Histophilus somni (strain 2336) (Haemophilus somnus) protein is UPF0352 protein HSM_0097.